Here is a 421-residue protein sequence, read N- to C-terminus: MGKLVVQGGTVLEGEVEISGSKNAALPIMAAAILCDEEIILKNVPRLQDVFVMIDILRSIGFRVEFDENELKIKRENDISQEVPYELVRKMRASFNVLGPIAVRTGRAKVALPGGCSIGVRPVDFHLEGLKKMGFSIKVEHGFVEATFERRTDQVTITLPFPSVGATEHLMTTAALLEGTRVVIENAAMEPEIVDLQNFINRMGGRIEGAGTSRIVIEGVEKMQGVEYSIIPDRIEAGTYLVAIAASRGKGLVKNVNPDHLTNFFEKLEETGVKLKVFGNEVEIEMRERPEAVDVTTNPYPGFPTDLQPQMMAYLSIASGVSVITENVFKTRFLHVDELKRMGADIEVSGNVAIVKGVEKLSGAPVEGTDLRATAALLIAGIIADGVTEISNVEHIFRGYEDVIDKFSKLGAKIEYVEKEN.

22–23 (KN) provides a ligand contact to phosphoenolpyruvate. R92 is a UDP-N-acetyl-alpha-D-glucosamine binding site. C116 serves as the catalytic Proton donor. 2-(S-cysteinyl)pyruvic acid O-phosphothioketal is present on C116. UDP-N-acetyl-alpha-D-glucosamine contacts are provided by D306 and V328.

Belongs to the EPSP synthase family. MurA subfamily.

The protein localises to the cytoplasm. The enzyme catalyses phosphoenolpyruvate + UDP-N-acetyl-alpha-D-glucosamine = UDP-N-acetyl-3-O-(1-carboxyvinyl)-alpha-D-glucosamine + phosphate. It participates in cell wall biogenesis; peptidoglycan biosynthesis. Cell wall formation. Adds enolpyruvyl to UDP-N-acetylglucosamine. In Thermotoga petrophila (strain ATCC BAA-488 / DSM 13995 / JCM 10881 / RKU-1), this protein is UDP-N-acetylglucosamine 1-carboxyvinyltransferase.